The sequence spans 117 residues: Large ribosomal subunit protein uL18 (117 aa).

It belongs to the universal ribosomal protein uL18 family. In terms of assembly, part of the 50S ribosomal subunit; part of the 5S rRNA/L5/L18/L25 subcomplex. Contacts the 5S and 23S rRNAs.

Its function is as follows. This is one of the proteins that bind and probably mediate the attachment of the 5S RNA into the large ribosomal subunit, where it forms part of the central protuberance. The chain is Large ribosomal subunit protein uL18 from Yersinia enterocolitica serotype O:8 / biotype 1B (strain NCTC 13174 / 8081).